A 460-amino-acid polypeptide reads, in one-letter code: Glycine--tRNA ligase (460 aa).

Substrate-binding residues include Arg-98 and Glu-172. ATP is bound by residues 204-206 (RNE), 214-219 (FRTREF), 288-289 (EL), and 332-335 (GADR). 219-223 (FEQME) is a substrate binding site. 328-332 (EPSLG) contributes to the substrate binding site.

The protein belongs to the class-II aminoacyl-tRNA synthetase family. In terms of assembly, homodimer.

It localises to the cytoplasm. It carries out the reaction tRNA(Gly) + glycine + ATP = glycyl-tRNA(Gly) + AMP + diphosphate. Catalyzes the attachment of glycine to tRNA(Gly). This Geobacillus kaustophilus (strain HTA426) protein is Glycine--tRNA ligase.